The following is a 142-amino-acid chain: uncharacterized protein (142 aa).

Residues 1–138 (MLEKLAEAHP…SFMILVKPLA (138 aa)) form the N-acetyltransferase domain.

This is an uncharacterized protein from Bacillus subtilis (strain 168).